The chain runs to 393 residues: Glycocyamine kinase (393 aa).

The Phosphagen kinase N-terminal domain occupies 7-94; the sequence is REKFAKENFP…FDRVIEEIHH (88 aa). The region spanning 120 to 362 is the Phosphagen kinase C-terminal domain; that stretch reads YVKSCRIRCG…NVLIEADKRL (243 aa). ATP is bound by residues 123-127, histidine 186, arginine 231, 287-291, 315-320, and aspartate 330; these read SCRIR, RASVH, and RGTGGE. The segment at 367 to 393 is disordered; it reads PIDDLTPRLNSSTGTSISATASRHMTL. Residues 377-393 are compositionally biased toward low complexity; the sequence is SSTGTSISATASRHMTL.

Belongs to the ATP:guanido phosphotransferase family. Monomer.

It carries out the reaction guanidinoacetate + ATP = phosphoguanidinoacetate + ADP + H(+). The chain is Glycocyamine kinase from Hediste diversicolor (Sandworm).